Here is a 288-residue protein sequence, read N- to C-terminus: F420-non-reducing hydrogenase vhu subunit G (288 aa).

Belongs to the [NiFe]/[NiFeSe] hydrogenase small subunit family. The F420-non-reducing hydrogenase vhu is composed of four subunits; VhuA, VhuD, VhuG and VhuU.

In Methanocaldococcus jannaschii (strain ATCC 43067 / DSM 2661 / JAL-1 / JCM 10045 / NBRC 100440) (Methanococcus jannaschii), this protein is F420-non-reducing hydrogenase vhu subunit G (vhuG).